Here is a 385-residue protein sequence, read N- to C-terminus: Spermidine/putrescine import ATP-binding protein PotA (385 aa).

Residues 27 to 257 (ASFRAVSKHY…PANLFVAQFA (231 aa)) form the ABC transporter domain. An ATP-binding site is contributed by 59–66 (GPSGCGKT).

Belongs to the ABC transporter superfamily. Spermidine/putrescine importer (TC 3.A.1.11.1) family. The complex is composed of two ATP-binding proteins (PotA), two transmembrane proteins (PotB and PotC) and a solute-binding protein (PotD).

The protein resides in the cell inner membrane. The catalysed reaction is ATP + H2O + polyamine-[polyamine-binding protein]Side 1 = ADP + phosphate + polyamineSide 2 + [polyamine-binding protein]Side 1.. Part of the ABC transporter complex PotABCD involved in spermidine/putrescine import. Responsible for energy coupling to the transport system. This is Spermidine/putrescine import ATP-binding protein PotA from Methylococcus capsulatus (strain ATCC 33009 / NCIMB 11132 / Bath).